The chain runs to 176 residues: Parathyroid hormone-related protein (176 aa).

Residues 1 to 25 form the signal peptide; sequence MMFTKLFQQWSFAVFLLSYSVPSYG. Positions 26 to 37 are excised as a propeptide; it reads RSVEGISRRLKR. The tract at residues 58 to 69 is important for receptor binding; it reads RIFLQNLIEGVN. The interval 76-157 is disordered; the sequence is TSEVSPNPKP…WLNSGMYGSN (82 aa). Composition is skewed to polar residues over residues 77–91 and 106–116; these read SEVSPNPKPATNTKN and TQETNKSQTYK. Residues 109–130 carry the Nuclear localization signal motif; that stretch reads TNKSQTYKEQPLKVSGKKKKAK. The span at 123-133 shows a compositional bias: basic residues; sequence SGKKKKAKPGK.

It belongs to the parathyroid hormone family.

The protein localises to the secreted. It localises to the cytoplasm. The protein resides in the nucleus. Functionally, neuroendocrine peptide which is a critical regulator of cellular and organ growth, development, migration, differentiation and survival and of epithelial calcium ion transport. Acts by binding to its receptor, PTH1R, activating G protein-coupled receptor signaling. Regulates endochondral bone development and epithelial-mesenchymal interactions during the formation of the mammary glands and teeth. Required for skeletal homeostasis. In terms of biological role, potent inhibitor of osteoclastic bone resorption. In Gallus gallus (Chicken), this protein is Parathyroid hormone-related protein (PTHLH).